The following is a 324-amino-acid chain: Protein GET4 (324 aa).

This sequence belongs to the GET4 family. In terms of assembly, interacts with GET3A.

The protein resides in the cytoplasm. It is found in the cytosol. Involved in the regulation of root hair growth. This Arabidopsis thaliana (Mouse-ear cress) protein is Protein GET4.